The chain runs to 337 residues: Heme A synthase (337 aa).

The next 5 helical transmembrane spans lie at 6–26 (ITKW…IGGI), 87–107 (FIHR…VIYF), 119–139 (LPYI…WYMV), 154–174 (LAFH…QLIK), and 192–212 (LIFS…GALV). Histidine 256 is a binding site for heme. A run of 3 helical transmembrane segments spans residues 258–278 (LVGY…LKIE), 285–305 (IAYF…ITLL), and 308–328 (VPII…SVII). Histidine 316 lines the heme pocket.

The protein belongs to the COX15/CtaA family. Type 2 subfamily. Interacts with CtaB. Requires heme b as cofactor.

The protein resides in the cell membrane. The enzyme catalyses Fe(II)-heme o + 2 A + H2O = Fe(II)-heme a + 2 AH2. The protein operates within porphyrin-containing compound metabolism; heme A biosynthesis; heme A from heme O: step 1/1. Its function is as follows. Catalyzes the conversion of heme O to heme A by two successive hydroxylations of the methyl group at C8. The first hydroxylation forms heme I, the second hydroxylation results in an unstable dihydroxymethyl group, which spontaneously dehydrates, resulting in the formyl group of heme A. The protein is Heme A synthase of Rickettsia rickettsii (strain Iowa).